The chain runs to 553 residues: Arginine--tRNA ligase (553 aa).

The 'HIGH' region signature appears at 132-140; the sequence is PTGDLHIGH.

It belongs to the class-I aminoacyl-tRNA synthetase family. As to quaternary structure, monomer.

The protein resides in the cytoplasm. It carries out the reaction tRNA(Arg) + L-arginine + ATP = L-arginyl-tRNA(Arg) + AMP + diphosphate. The sequence is that of Arginine--tRNA ligase from Staphylococcus aureus (strain Mu50 / ATCC 700699).